A 413-amino-acid chain; its full sequence is Protein arginine N-methyltransferase 2 (413 aa).

Disordered stretches follow at residues 65–85 and 148–178; these read DDEE…QKSV and ELED…SAPQ. Residues 148 to 173 show a composition bias toward acidic residues; it reads ELEDDDEEEEEGQEEQTGTEEVEVEG. Residues 192-413 enclose the RMT2 domain; the sequence is TGPDVTNSRY…YRLPLCKYMD (222 aa). S-adenosyl-L-methionine is bound by residues tyrosine 201, methionine 230, 250-255, 271-273, 298-299, and aspartate 318; these read HGMGIV, EAH, and WQ.

The protein belongs to the class I-like SAM-binding methyltransferase superfamily. RMT2 methyltransferase family. In terms of assembly, monomer.

It localises to the cytoplasm. It is found in the nucleus. Functionally, S-adenosyl-L-methionine-dependent protein-arginine N-methyltransferase that methylates the delta-nitrogen atom of arginine residues to form N5-methylarginine (type IV) in target proteins. Monomethylates ribosomal protein L12. In Aspergillus oryzae (strain ATCC 42149 / RIB 40) (Yellow koji mold), this protein is Protein arginine N-methyltransferase 2.